The following is a 461-amino-acid chain: UDP-N-acetylmuramate--L-alanine ligase (461 aa).

Residue 111 to 117 (GAHGKTT) coordinates ATP.

It belongs to the MurCDEF family.

The protein resides in the cytoplasm. The enzyme catalyses UDP-N-acetyl-alpha-D-muramate + L-alanine + ATP = UDP-N-acetyl-alpha-D-muramoyl-L-alanine + ADP + phosphate + H(+). Its pathway is cell wall biogenesis; peptidoglycan biosynthesis. Its function is as follows. Cell wall formation. The sequence is that of UDP-N-acetylmuramate--L-alanine ligase from Pelotomaculum thermopropionicum (strain DSM 13744 / JCM 10971 / SI).